The chain runs to 619 residues: Probable Xaa-Pro aminopeptidase P (619 aa).

4 residues coordinate Mn(2+): Asp415, Asp426, Glu524, and Glu538.

The protein belongs to the peptidase M24B family. Mn(2+) is required as a cofactor.

The catalysed reaction is Release of any N-terminal amino acid, including proline, that is linked to proline, even from a dipeptide or tripeptide.. Catalyzes the removal of a penultimate prolyl residue from the N-termini of peptides. In Fusarium vanettenii (strain ATCC MYA-4622 / CBS 123669 / FGSC 9596 / NRRL 45880 / 77-13-4) (Fusarium solani subsp. pisi), this protein is Probable Xaa-Pro aminopeptidase P (AMPP).